The chain runs to 316 residues: Methionyl-tRNA formyltransferase (316 aa).

113-116 (SLLP) contacts (6S)-5,6,7,8-tetrahydrofolate.

The protein belongs to the Fmt family.

It catalyses the reaction L-methionyl-tRNA(fMet) + (6R)-10-formyltetrahydrofolate = N-formyl-L-methionyl-tRNA(fMet) + (6S)-5,6,7,8-tetrahydrofolate + H(+). In terms of biological role, attaches a formyl group to the free amino group of methionyl-tRNA(fMet). The formyl group appears to play a dual role in the initiator identity of N-formylmethionyl-tRNA by promoting its recognition by IF2 and preventing the misappropriation of this tRNA by the elongation apparatus. The polypeptide is Methionyl-tRNA formyltransferase (Proteus mirabilis (strain HI4320)).